The primary structure comprises 339 residues: Large ribosomal subunit protein uL29 (339 aa).

A large ribosomal subunit protein uL29 region spans residues 1–96 (MNDLTKKSVE…FAKQRKAKIE (96 aa)). Residues 97–339 (QMMAEQQAAE…KTTKKGTGKK (243 aa)) are unknown. 2 disordered regions span residues 129 to 254 (VVST…VPTK) and 311 to 339 (KENR…TGKK). Residues 145–156 (APVAAKKPAAAK) show a composition bias toward low complexity. Positions 157–170 (DFPKQKDVVEEKTA) are enriched in basic and acidic residues. Over residues 171 to 182 (TGKPAAPSAKKA) the composition is skewed to low complexity. A compositionally biased stretch (basic and acidic residues) spans 185–210 (AKKDVAQETKTDKDAALKALIKEKAA). Residues 217–238 (KSKTSTPSGKTTVTVKSVTSAK) are compositionally biased toward low complexity. Positions 239–248 (ADIEVPKETS) are enriched in basic and acidic residues.

The protein belongs to the universal ribosomal protein uL29 family. As to quaternary structure, forms homomultimers. Part of the ribosome; radioactive IRS binds to purified ribosomes.

In terms of biological role, specifically binds a DNA inverted repeat sequence (IRS) found downstream of rpsB in one of the ribosomal subunit operons (for genes rpsB, tsf, and unknown gene x). Might be involved in regulation of transcription of the rpsB operon; the IRS may be a control element to attenuate transcription. The protein is Large ribosomal subunit protein uL29 of Spiroplasma citri.